The chain runs to 100 residues: Aspartyl/glutamyl-tRNA(Asn/Gln) amidotransferase subunit C (100 aa).

This sequence belongs to the GatC family. As to quaternary structure, heterotrimer of A, B and C subunits.

The catalysed reaction is L-glutamyl-tRNA(Gln) + L-glutamine + ATP + H2O = L-glutaminyl-tRNA(Gln) + L-glutamate + ADP + phosphate + H(+). It carries out the reaction L-aspartyl-tRNA(Asn) + L-glutamine + ATP + H2O = L-asparaginyl-tRNA(Asn) + L-glutamate + ADP + phosphate + 2 H(+). Functionally, allows the formation of correctly charged Asn-tRNA(Asn) or Gln-tRNA(Gln) through the transamidation of misacylated Asp-tRNA(Asn) or Glu-tRNA(Gln) in organisms which lack either or both of asparaginyl-tRNA or glutaminyl-tRNA synthetases. The reaction takes place in the presence of glutamine and ATP through an activated phospho-Asp-tRNA(Asn) or phospho-Glu-tRNA(Gln). The polypeptide is Aspartyl/glutamyl-tRNA(Asn/Gln) amidotransferase subunit C (Streptococcus agalactiae serotype Ia (strain ATCC 27591 / A909 / CDC SS700)).